We begin with the raw amino-acid sequence, 284 residues long: Acetyl-coenzyme A carboxylase carboxyl transferase subunit beta (284 aa).

In terms of domain architecture, CoA carboxyltransferase N-terminal spans 24 to 284 (GLWYKSPTGK…LDLILNNEVR (261 aa)).

Belongs to the AccD/PCCB family. As to quaternary structure, acetyl-CoA carboxylase is a heterohexamer composed of biotin carboxyl carrier protein (AccB), biotin carboxylase (AccC) and two subunits each of ACCase subunit alpha (AccA) and ACCase subunit beta (AccD).

Its subcellular location is the cytoplasm. The catalysed reaction is N(6)-carboxybiotinyl-L-lysyl-[protein] + acetyl-CoA = N(6)-biotinyl-L-lysyl-[protein] + malonyl-CoA. It participates in lipid metabolism; malonyl-CoA biosynthesis; malonyl-CoA from acetyl-CoA: step 1/1. Its function is as follows. Component of the acetyl coenzyme A carboxylase (ACC) complex. Biotin carboxylase (BC) catalyzes the carboxylation of biotin on its carrier protein (BCCP) and then the CO(2) group is transferred by the transcarboxylase to acetyl-CoA to form malonyl-CoA. The sequence is that of Acetyl-coenzyme A carboxylase carboxyl transferase subunit beta from Flavobacterium psychrophilum (strain ATCC 49511 / DSM 21280 / CIP 103535 / JIP02/86).